Consider the following 34-residue polypeptide: Colipase (34 aa).

Cystine bridges form between cysteine 12–cysteine 23 and cysteine 18–cysteine 34.

Belongs to the colipase family. Forms a 1:1 stoichiometric complex with pancreatic lipase. In terms of tissue distribution, expressed by the pancreas.

The protein resides in the secreted. In terms of biological role, colipase is a cofactor of pancreatic lipase. It allows the lipase to anchor itself to the lipid-water interface. Without colipase the enzyme is washed off by bile salts, which have an inhibitory effect on the lipase. In Gallus gallus (Chicken), this protein is Colipase (CLPS).